The primary structure comprises 441 residues: Proline--tRNA ligase (441 aa).

Belongs to the class-II aminoacyl-tRNA synthetase family. ProS type 2 subfamily. As to quaternary structure, homodimer.

The protein localises to the cytoplasm. It carries out the reaction tRNA(Pro) + L-proline + ATP = L-prolyl-tRNA(Pro) + AMP + diphosphate. In terms of biological role, catalyzes the attachment of proline to tRNA(Pro) in a two-step reaction: proline is first activated by ATP to form Pro-AMP and then transferred to the acceptor end of tRNA(Pro). The sequence is that of Proline--tRNA ligase from Methylobacterium radiotolerans (strain ATCC 27329 / DSM 1819 / JCM 2831 / NBRC 15690 / NCIMB 10815 / 0-1).